Here is a 330-residue protein sequence, read N- to C-terminus: Aspartate--ammonia ligase (330 aa).

The protein belongs to the class-II aminoacyl-tRNA synthetase family. AsnA subfamily.

It localises to the cytoplasm. It carries out the reaction L-aspartate + NH4(+) + ATP = L-asparagine + AMP + diphosphate + H(+). It participates in amino-acid biosynthesis; L-asparagine biosynthesis; L-asparagine from L-aspartate (ammonia route): step 1/1. The sequence is that of Aspartate--ammonia ligase from Streptococcus pyogenes serotype M49 (strain NZ131).